A 265-amino-acid chain; its full sequence is Orphan methyltransferase M.BamHII (265 aa).

The protein belongs to the N(4)/N(6)-methyltransferase family. N(4) subfamily.

The catalysed reaction is a 2'-deoxycytidine in DNA + S-adenosyl-L-methionine = an N(4)-methyl-2'-deoxycytidine in DNA + S-adenosyl-L-homocysteine + H(+). In terms of biological role, a beta subtype methylase, recognizes the double-stranded sequence 5'-GGATCC-3', methylates C-? on both strands. No endonuclease has been identified for this methylase, although it is speculated it might protect against BamHI. The polypeptide is Orphan methyltransferase M.BamHII (bamHIIM) (Bacillus amyloliquefaciens (Bacillus velezensis)).